A 158-amino-acid polypeptide reads, in one-letter code: RING-H2 finger protein ATL66 (158 aa).

Residues 33–53 (LFFALALFSVVLFFALLTLYI) form a helical membrane-spanning segment. An RING-type; atypical zinc finger spans residues 107–149 (CCICLGGFEEGEKMKVLPPCSHCYHCECVDRWLKTESSCPLCR).

It belongs to the RING-type zinc finger family. ATL subfamily.

The protein resides in the membrane. It carries out the reaction S-ubiquitinyl-[E2 ubiquitin-conjugating enzyme]-L-cysteine + [acceptor protein]-L-lysine = [E2 ubiquitin-conjugating enzyme]-L-cysteine + N(6)-ubiquitinyl-[acceptor protein]-L-lysine.. It functions in the pathway protein modification; protein ubiquitination. The sequence is that of RING-H2 finger protein ATL66 (ATL66) from Arabidopsis thaliana (Mouse-ear cress).